A 377-amino-acid chain; its full sequence is MPRSVTADASGSFLTLTFEDGSESRFHAIWLRDNALDPETRSPGNGQRLITIGDIPADTRISTALVDDGALTVTFAPEGKTVTFPGKWLKSNAYDTDQSSEVGRTSPDVETWDSSQPAPAFDWNEVQSDPKAKRDWLDAIARLGFAKLVNGPVREGALIECASMFGFVRETNYGKYFEVRTEVNPTNLAYTGLGLQAHTDNPYRDPVPSLQILYCLENSAEGGDSIVVDGFRAAERLRDEDPEGFALLAGNPARFEYKGSDGVHLRARRPMIELSPDGEMIAIRFNNRSSAPFVDIPFEKMEAYYAAYRRLGEFIDDPEMGVSFKLEPGESFIVDNTRVLHARLGYSGSGSRWLQGCYADKDGLFSTLNVLNAQLGG.

The disordered stretch occupies residues 95–119 (DTDQSSEVGRTSPDVETWDSSQPAP). Asn-187 provides a ligand contact to [2-(trimethylamino)ethyl]phosphonate. His-198 serves as a coordination point for 2-oxoglutarate. His-198 and Asp-200 together coordinate Fe(2+). The [2-(trimethylamino)ethyl]phosphonate site is built by Asp-200, Asn-201, Tyr-203, Asn-286, and Arg-288. 3 residues coordinate 2-oxoglutarate: His-341, Arg-343, and Arg-352. Residue His-341 participates in Fe(2+) binding.

This sequence belongs to the gamma-BBH/TMLD family. In terms of assembly, homodimer. It depends on Fe(2+) as a cofactor. The cofactor is L-ascorbate.

The enzyme catalyses [2-(trimethylamino)ethyl]phosphonate + 2-oxoglutarate + O2 = [(1R)-1-hydroxy-2-(trimethylamino)ethyl]phosphonate + succinate + CO2. Involved in the degradation of the naturally occurring organophosphonate 2-(trimethylammonio)ethylphosphonate (TMAEP). Catalyzes the hydroxylation of TMAEP to (R)-1-hydroxy-2-(trimethylammonio)ethylphosphonate (OH-TMAEP). Is highly specific for its N-trimethylated substrate. Cannot use gamma-butyrobetaine as substrate. In Leisingera caerulea (Phaeobacter caeruleus), this protein is [2-(trimethylamino)ethyl]phosphonate dioxygenase.